A 107-amino-acid polypeptide reads, in one-letter code: U1-lycotoxin-Ls1k (107 aa).

A signal peptide spans 1-20; that stretch reads MMKVLVVVALLVTLISYSSS. Residues 21–41 constitute a propeptide that is removed on maturation; the sequence is EGIDDLEADELLSLMANEQTR. Disulfide bonds link cysteine 44-cysteine 59, cysteine 51-cysteine 68, cysteine 58-cysteine 86, and cysteine 70-cysteine 84.

Belongs to the neurotoxin 19 (CSTX) family. 04 (U1-Lctx) subfamily. In terms of tissue distribution, expressed by the venom gland.

The protein resides in the secreted. This Lycosa singoriensis (Wolf spider) protein is U1-lycotoxin-Ls1k.